Consider the following 461-residue polypeptide: Inositol-trisphosphate 3-kinase A (461 aa).

Residues 1 to 29 (MTLPGGPTGMARPGGARPCSPGLERAPRR) form a disordered region. The tract at residues 1 to 133 (MTLPGGPTGM…SVSSTGSSSL (133 aa)) is required for cytoskeleton location. Omega-N-methylarginine occurs at positions 35, 55, and 62. Residues 49 to 160 (AAAGEPRARG…GNVQLEAGED (112 aa)) are disordered. Positions 118–134 (RRLSTSSVSSTGSSSLL) are enriched in low complexity. Residues S137 and S197 each carry the phosphoserine modification. ATP contacts are provided by residues S197, K209, 249–251 (QDL), and D262. Residues K264 and R285 each coordinate substrate. Residues 287-295 (DMYKKMLAV) form a calmodulin-binding region. 312–319 (KPRYMQWR) contacts substrate. 2 residues coordinate ATP: K336 and D416. K419 contacts substrate.

Belongs to the inositol phosphokinase (IPK) family. Expressed in brain.

It is found in the cytoplasm. The protein localises to the cytoskeleton. The catalysed reaction is 1D-myo-inositol 1,4,5-trisphosphate + ATP = 1D-myo-inositol 1,3,4,5-tetrakisphosphate + ADP + H(+). With respect to regulation, activated by calcium/calmodulin. Its function is as follows. Catalyzes the phosphorylation of 1D-myo-inositol 1,4,5-trisphosphate (InsP3) into 1D-myo-inositol 1,3,4,5-tetrakisphosphate and participates to the regulation of calcium homeostasis. This Homo sapiens (Human) protein is Inositol-trisphosphate 3-kinase A.